Reading from the N-terminus, the 5207-residue chain is MFRLSRELLDEKGPEVLQDSLDRCYSTPSGCLELTDSCQPYRSAFYVLEQQRIGLAVDMDEIEKYQEVEEDQDPSCPRLSRELLDEKEPEVLQDSLDRCYSTPSGYLELPDLGQPYSSAVYSLEEQYLGLALDVDRTKKDQEEEEDQGPPCPRLSRELLEVVEPEVLQDSLDRCYSTPSSCLEQPDSCQPYGSSFYALEEKHVGFSLDVGEIEKKGKGKKRRGRRSKKERRRGRKEGEEDQNPPCPRLSRELLDEKGPEVLQDSLDRCYSTPSGCLELTDSCQPYRSAFYVLEQQRVGLAVDMDEIEKYQEVEEDQDPSCPRLSRELLDEKEPEVLQDSLDRCYSTPSGYLELPDLGQPYSSAVYSLEEQYLGLALDVDRTKKDQEEEEDQGPPCPRLSRELLEVVEPEVLQDSLDRCYSTPSSCLEQPDSCQPYGSSFYALEEKHVGFSLDVGEIEKKGKGKKRRGRRSKKERRRGRKEGEEDQNPPCPRLSRELLDEKGPEVLQDSLDRSYSTPSGCLELTDSCQPYRSAFYVLEQQRVGLAVDMDEIEKYQEVEEDQDPSCPRLSRELLDEKEPEVLQDSLDRCYSTPSGYLELPDLGQPYSSAVYSLEEQYLGLALDVDRTKKDQEEEEDQGPPCPRLSRELLEVVEPEVLQDSLDRCYSTPSSCLEQPDSCQPYGSSFYALEEKHVGFSLDVGEIEKKGKGKKRRGRRSKKERRRGRKEGEEDQNPPCPRLSRELLDEKGPEVLQDSLDRCYSTPSGCLELTDSCQPYRSAFYVLEQQRVGLAVDMDEIEKYQEVEEDQDPSCPRLSRELLDEKEPEVLQDSLDRCYSTPSGYLELPDLGQPYSSAVYSLEEQYLGLALDVDRTKKDQEEEEDQGPPCPRLSRELLEVVEPEVLQDSLDRCYSTPSSCLEQPDSCQPYGSSFYALEEKHVGFSLDVGEIEKKGKGKKRRGRRSKKERRRGRKEGEEDQNPPCPRLSRELLDEKGPEVLQDSLDRSYSTPSGCLELTDSCQPYRSAFYVLEQQRVGLAVDMDEIEKYQEVEEDQDPSCPRLSRELLDEKEPEVLQDSLDRCYSTPSGYLELPDLGQPYSSAVYSLEEQYLGLALDVDRTKKDQEEEEDQGPPCPRLSRELLEVVEPEVLQDSLDRCYSTPSSCLEQPDSCQPYGSSFYALEEKHVGFSLDVGEIEKKGKGKKRRGRRSKKERRRGRKEGEEDQNPPCPRLSRELLDEKGPEVLQDSLDRSYSTPSGCLELTDSCQPYRSAFYVLEQQRVGLAVDMDEIEKYQEVEEDQDPSCPRLSRELLDEKEPEVLQDSLDRCYSTPSGYLELPDLGQPYSSAVYSLEEQYLGLALDVDRTKKDQEEEEDQGPPCPRLSRELLEVVEPEVLQDSLDRCYSTPSSCLEQPDSCQPYGSSFYALEEKHVGFSLDVGEIEKKGKGKKRRGRRSKKERRRGRKEGEEDQTPPCPRLSRELLDEKGPEVLQDSLDRSYSTPSGCLELTDSCQPYRSAFYVLEQQRVGLAVDMDEIEKYQEVEEDQDPSCPRLSRELLDEKEPEVLQDSLDRCYSTPSGYLELPDLGQPYSSAVYSLEEQYLGLALDVDRTKKDQEEEEDQGPPCPRLSRELLEVVEPEVLQDSLDRCYSTPSSCLEQPDSCQPYGSSFYALEEKHVGFSLDVGEIEKKGKGKKRRGRRSKKERRRGRKEGEEDQNPPCPRLSRELLDEKGPEVLQDSLDRSYSTPSGCLELTDSCQPYRSAFYVLEQQRVGLAVDMDEIEKYQEVEEDQDPSCPRLSRELLDEKEPEVLQDSLDRCYSTPSGYLELPDLGQPYSSAVYSLEEQYLGLALDVDRTKKDQEEEEDQGPPCPRLSRELLEVVEPEVLQDSLDRCYSTPSSCLEQPDSCQPYGSSFYALEEKHVGFSLDVGEIEKKGKGKKRRGRRSKKERRRGRKEGEEDQNPPCPRLSRELLDEKGPEVLQDSLDRCYSTPSGCLELTDSCQPYRSAFYVLEQQRVGLAVDMDEIEKYQEVEEDQDPSCPRLSRELLDEKEPEVLQDSLDRCYSTPSGYLELPDLGQPYSSAVYSLEEQYLGLALDVDRTKKDQEEEEDQGPPCPRLSRELLEVVEPEVLQDSLDRCYSTPSSCLEQPDSCQPYGSSFYALEEKHVGFSLDVGEIEKKGKGKKRRGRRSKKERRRGRKEGEEDQNPPCPRLSRELLDEKGPEVLQDSLDRCYSTPSGCLELTDSCQPYRSAFYVLEQQRVGLAVDMDEIEKYQEVEEDQDPSCPRLSRELLDEKEPEVLQDSLDRCYSTPSGYLELPDLGQPYSSAVYSLEEQYLGLALDVDRTKKDQEEEEDQGPPCPRLSRELLEVVEPEVLQDSLDRCYSTPSSCLEQPDSCQPYGSSFYALEEKHVGFSLDVGEIEKKGKGKKRRGRRSKKERRRGRKEGEEDQNPPCPRLSRELLDEKGPEVLQDSLDRCYSTPSGCLELTDSCQPYRSAFYVLEQQRVGLAVDMDEIEKYQEVEEDQDPSCPRLSRELLDEKEPEVLQDSLDRCYSTPSGYLELPDLGQPYSSAVYSLEEQYLGLALDVDRTKKDQEEEEDQGPPCPRLSRELLEVVEPEVLQDSLDRCYSTPSSCLEQPDSCQPYGSSFYALEEKHVGFSLDVGEIEKKGKGKKRRGRRSKKERRRGRKEGEEDQNPPCPRLSRELLDEKGPEVLQDSLDRSYSTPSGCLELTDSCQPYRSAFYVLEQQRVGLAVDMDEIEKYQEVEEDQDPSCPRLSRELLDEKEPEVLQDSLDRCYSTPSGYLELPDLGQPYSSAVYSLEEQYLGLALDVDRTKKDQEEEEDQGPPCPRLSRELLEVVEPEVLQDSLDRCYSTPSSCLEQPDSCQPYGSSFYALEEKHVGFSLDVGEIEKKGKGKKRRGRRSKKERRRGRKEGEEDQNPPCPRLSRELLDEKGPEVLQDSLDRSYSTPSGCLELTDSCQPYRSAFYVLEQQRVGLAVDMDEIEKYQEVEEDQDPSCPRLSRELLDEKEPEVLQDSLDRCYSTPSGYLELPDLGQPYSSAVYSLEEQYLGLALDVDRTKKDQEEEEDQGPPCPRLSRELLEVVEPEVLQDSLDRCYSTPSSCLEQPDSCQPYGSSFYALEEKHVGFSLDVGEIEKKGKGKKRRGRRSKKERRRGRKEGEEDQNPPCPRLSRELLDEKGPEVLQDSLDRSYSTPSGCLELTDSCQPYRSAFYVLEQQRVGLAVDMDEIEKYQEVEEDQDPSCPRLSRELLDEKEPEVLQDSLDRCYSTPSGYLELPDLGQPYSSAVYSLEEQYLGLALDVDRTKKDQEEEEDQGPPCPRLSRELLEVVEPEVLQDSLDRCYSTPSSCLEQPDSCQPYGSSFYALEEKHVGFSLDVGEIEKKGKGKKRRGRRSKKERRRGRKEGEEDQNPPCPRLSRELLDEKGPEVLQDSLDRSYSTPSGCLELTDSCQPYRSAFYVLEQQRVGLAVDMDEIEKYQEVEEDQDPSCPRLSRELLDEKEPEVLQDSLDRCYSTPSGYLELPDLGQPYSSAVYSLEEQYLGLALDVDRTKKDQEEEEDQGPPCPRLSRELLEVVEPEVLQDSLDRCYSTPSSCLEQPDSCQPYGSSFYALEEKHVGFSLDVGEIEKKGKGKKRRGRRSKKERRRGRKEGEEDQNPPCPRLSRELLDEKGPEVLQDSLDRCYSTPSGCLELTDSCQPYRSAFYVLEQQRVGLAVDMDEIEKYQEVEEDQDPSCPRLSRELLDEKEPEVLQDSLDRCYSTPSGYLELPDLGQPYSSAVYSLEEQYLGLALDVDRTKKDQEEEEDQGPPCPRLSRELLEVVEPEVLQDSLDRCYSTPSSCLEQPDSCQPYGSSFYALEEKHVGFSLDVGEIEKKGKGKKRRGRRSKKERRRGRKEGEEDQNPPCPRLSRELLDEKGPEVLQDSLDRCYSTPSGCLELTDSCQPYRSAFYVLEQQRVGLAVDMDEIEKYQEVEEDQDPSCPRLSRELLDEKEPEVLQDSLDRCYSTPSGYLELPDLGQPYSSAVYSLEEQYLGLALDVDRTKKDQEEEEDQGPPCPRLSRELLEVVEPEVLQDSLDRCYSTPSSCLEQPDSCQPYGSSFYALEEKHVGFSLDVGEIEKKGKGKKRRGRRSKKERRRGRKEGEEDQTPPCPRLSRELLDEKGPEVLQDSLDRCYSTPSGCLELTDSCQPYRSAFYVLEQQRVGLAVDMDEIEKYQEVEEDQDPSCPRLSRELLDEKEPEVLQDSLDRCYSTPSGYLELPDLGQPYSSAVYSLEEQYLGLALDVDRTKKDQEEEEDQGPPCPRLSRELLEVVEPEVLQDSLDRCYSTPSSCLEQPDSCQPYGSSFYALEEKHVGFSLDVGEIEKKGKGKKRRGRRSKKERRRGRKEGEEDQNPPCPRLSRELLDEKEPEVLQDSLDRCYSTPSGYLELPDLGQPYSSAVYSLEEQYLGLALDVDRTKKDQEEEEDQGPPCPRLSRELLEVVEPEVLQDSLDRCYSTPSSCLEQPDSCQPYGSSFYALEEKHVGFSLDVGEIEKKGKGKKRRGRRSKKERRRGRKEGEEDQNPPCPRLSRELLDEKEPEVLQDSLDRCYSTPSGYLELPDLGQPYSSAVYSLEEQYLGLALDVDRTKKDQEEEEDQGPPCPRLSRELLEVVEPEVLQDSLDRCYSTPSSCLELTDSCQPYRSAFYVLEQQRVGLAVDMDEIEKYQEVEEDQDPSCPRLSRELLDEKEPEVLQDSLDRCYSTPSGYLELPDLGQPYSSAVYSLEEQYLGLALDVDRTKKDQEEEEDQGPPCPRLSRELLEVVEPEVLQDSLDRCYSTPSSCLEQPDSCQPYGSSFYALEEKHVGFSLDVGEIEKKGKGKKRRGRRSKKERRRGRKEGEEDQNPPCPRLSRELLDEKGPEVLQDSLDRCYSTPSGCLELTDSCQPYRSAFYVLEQQRVGLAVDMDEIEKYQEVEEDQDPSCPRLSRELLDEKEPEVLQDSLDRCYSTPSGYLELPDLGQPYSSAVYSLEEQYLGLALDVDRTKKDQEEEEDQGPPCPRLSRELLEVVEPEVLQDSLDRCYSTPSSCLEQPDSCQPYGSSFYALEEKHVGFSLDVGEIEKKGKGKKRRGRRSKKKRRRGRKEGEEDQNPPCPRLNGVLMEVEEPEVLQDSLDGCYSTPSMYFELPDSFQHYRSVFYSFEEQHISFALYVDNRFFTLTVTSLHLVFQMGVIFPQ.

Olduvai domains follow at residues 5-77 (SREL…PSCP), 80-135 (SREL…LDVD), 136-228 (RTKK…RSKK), 229-321 (ERRR…PSCP), 324-379 (SREL…LDVD), 380-472 (RTKK…RSKK), 473-565 (ERRR…PSCP), 568-623 (SREL…LDVD), 624-716 (RTKK…RSKK), 717-809 (ERRR…PSCP), 812-867 (SREL…LDVD), 868-960 (RTKK…RSKK), 961-1053 (ERRR…PSCP), 1056-1111 (SREL…LDVD), 1112-1204 (RTKK…RSKK), 1205-1297 (ERRR…PSCP), 1300-1355 (SREL…LDVD), 1356-1448 (RTKK…RSKK), 1449-1541 (ERRR…PSCP), 1544-1599 (SREL…LDVD), 1600-1692 (RTKK…RSKK), 1693-1785 (ERRR…PSCP), 1788-1843 (SREL…LDVD), 1844-1936 (RTKK…RSKK), 1937-2029 (ERRR…PSCP), 2032-2087 (SREL…LDVD), 2088-2180 (RTKK…RSKK), 2181-2273 (ERRR…PSCP), 2276-2331 (SREL…LDVD), 2332-2424 (RTKK…RSKK), 2425-2517 (ERRR…PSCP), 2520-2575 (SREL…LDVD), 2576-2668 (RTKK…RSKK), 2669-2761 (ERRR…PSCP), 2764-2819 (SREL…LDVD), 2820-2912 (RTKK…RSKK), 2913-3005 (ERRR…PSCP), 3008-3063 (SREL…LDVD), 3064-3156 (RTKK…RSKK), 3157-3249 (ERRR…PSCP), 3252-3307 (SREL…LDVD), 3308-3400 (RTKK…RSKK), 3401-3493 (ERRR…PSCP), 3496-3551 (SREL…LDVD), 3552-3644 (RTKK…RSKK), 3645-3737 (ERRR…PSCP), 3740-3795 (SREL…LDVD), 3796-3888 (RTKK…RSKK), 3889-3981 (ERRR…PSCP), 3984-4039 (SREL…LDVD), 4040-4132 (RTKK…RSKK), 4133-4225 (ERRR…PSCP), 4228-4283 (SREL…LDVD), 4284-4376 (RTKK…RSKK), 4377-4452 (ERRR…LDVD), 4453-4545 (RTKK…RSKK), 4546-4621 (ERRR…LDVD), 4622-4713 (RTKK…PSCP), 4716-4771 (SREL…LDVD), 4772-4864 (RTKK…RSKK), 4865-4957 (ERRR…PSCP), 4960-5015 (SREL…LDVD), 5016-5108 (RTKK…RSKK), and 5109-5207 (KRRR…IFPQ). 2 disordered regions span residues 137-157 (TKKD…LSRE) and 215-256 (KGKG…LDEK). A compositionally biased stretch (basic residues) spans 216-234 (GKGKKRRGRRSKKERRRGR). Disordered stretches follow at residues 381-403 (TKKD…RELL) and 459-513 (KGKG…DRSY). Residues 460–478 (GKGKKRRGRRSKKERRRGR) are compositionally biased toward basic residues. The segment covering 492 to 502 (LSRELLDEKGP) has biased composition (basic and acidic residues). 2 disordered regions span residues 625–647 (TKKD…RELL) and 703–744 (KGKG…LDEK). The segment covering 704–722 (GKGKKRRGRRSKKERRRGR) has biased composition (basic residues). Disordered stretches follow at residues 869 to 891 (TKKD…RELL) and 947 to 1001 (KGKG…DRSY). Positions 948 to 966 (GKGKKRRGRRSKKERRRGR) are enriched in basic residues. A compositionally biased stretch (basic and acidic residues) spans 980-990 (LSRELLDEKGP). Disordered stretches follow at residues 1113–1135 (TKKD…RELL) and 1191–1245 (KGKG…DRSY). The span at 1192-1210 (GKGKKRRGRRSKKERRRGR) shows a compositional bias: basic residues. A compositionally biased stretch (basic and acidic residues) spans 1224 to 1234 (LSRELLDEKGP). Disordered regions lie at residues 1357–1379 (TKKD…RELL) and 1435–1489 (KGKG…DRSY). The segment covering 1436-1454 (GKGKKRRGRRSKKERRRGR) has biased composition (basic residues). Basic and acidic residues predominate over residues 1468–1478 (LSRELLDEKGP). Disordered regions lie at residues 1601–1623 (TKKD…RELL) and 1679–1733 (KGKG…DRSY). Basic residues predominate over residues 1680–1698 (GKGKKRRGRRSKKERRRGR). The segment covering 1712 to 1722 (LSRELLDEKGP) has biased composition (basic and acidic residues). Disordered regions lie at residues 1845 to 1867 (TKKD…RELL) and 1923 to 1964 (KGKG…LDEK). A compositionally biased stretch (basic residues) spans 1924–1942 (GKGKKRRGRRSKKERRRGR). 2 disordered regions span residues 2089–2111 (TKKD…RELL) and 2167–2208 (KGKG…LDEK). Basic residues predominate over residues 2168 to 2186 (GKGKKRRGRRSKKERRRGR). Disordered regions lie at residues 2333-2355 (TKKD…RELL) and 2411-2452 (KGKG…LDEK). Basic residues predominate over residues 2412–2430 (GKGKKRRGRRSKKERRRGR). 2 disordered regions span residues 2577 to 2599 (TKKD…RELL) and 2655 to 2709 (KGKG…DRSY). The segment covering 2656-2674 (GKGKKRRGRRSKKERRRGR) has biased composition (basic residues). Residues 2688–2698 (LSRELLDEKGP) show a composition bias toward basic and acidic residues. Disordered regions lie at residues 2821 to 2843 (TKKD…RELL) and 2899 to 2953 (KGKG…DRSY). A compositionally biased stretch (basic residues) spans 2900–2918 (GKGKKRRGRRSKKERRRGR). Basic and acidic residues predominate over residues 2932 to 2942 (LSRELLDEKGP). Disordered regions lie at residues 3065–3087 (TKKD…RELL) and 3143–3197 (KGKG…DRSY). Over residues 3144–3162 (GKGKKRRGRRSKKERRRGR) the composition is skewed to basic residues. Residues 3176-3186 (LSRELLDEKGP) show a composition bias toward basic and acidic residues. 2 disordered regions span residues 3309 to 3331 (TKKD…RELL) and 3387 to 3441 (KGKG…DRSY). Over residues 3388–3406 (GKGKKRRGRRSKKERRRGR) the composition is skewed to basic residues. A compositionally biased stretch (basic and acidic residues) spans 3420-3430 (LSRELLDEKGP). Disordered stretches follow at residues 3553 to 3575 (TKKD…RELL) and 3631 to 3672 (KGKG…LDEK). Residues 3632-3650 (GKGKKRRGRRSKKERRRGR) are compositionally biased toward basic residues. Disordered stretches follow at residues 3797-3819 (TKKD…RELL) and 3875-3916 (KGKG…LDEK). The segment covering 3876 to 3894 (GKGKKRRGRRSKKERRRGR) has biased composition (basic residues). 2 disordered regions span residues 4041-4063 (TKKD…RELL) and 4119-4160 (KGKG…LDEK). Positions 4120–4138 (GKGKKRRGRRSKKERRRGR) are enriched in basic residues. Disordered stretches follow at residues 4285 to 4307 (TKKD…RELL), 4361 to 4404 (EKKG…LDEK), 4453 to 4474 (RTKK…LSRE), and 4530 to 4573 (EKKG…LDEK). Residues 4364 to 4382 (GKGKKRRGRRSKKERRRGR) show a composition bias toward basic residues. The segment covering 4533 to 4551 (GKGKKRRGRRSKKERRRGR) has biased composition (basic residues). 2 disordered regions span residues 4773–4793 (TKKD…LSRE) and 4851–4889 (KGKG…RELL). Basic residues predominate over residues 4852–4870 (GKGKKRRGRRSKKERRRGR). 2 disordered regions span residues 5017 to 5037 (TKKD…LSRE) and 5094 to 5128 (KKGK…CPRL). Residues 5096 to 5114 (GKGKKRRGRRSKKKRRRGR) show a composition bias toward basic residues.

Belongs to the NBPF family.

It localises to the cytoplasm. This Homo sapiens (Human) protein is NBPF family member NBPF20.